A 796-amino-acid polypeptide reads, in one-letter code: Peroxisome proliferator-activated receptor gamma coactivator 1-alpha (796 aa).

Lys77 is modified (N6-acetyllysine). Positions 98–138 (PVDEDGLPSFDALTDGDVTTDNEASPSSMPDGTPPPQEAEE) are disordered. Over residues 114–127 (DVTTDNEASPSSMP) the composition is skewed to polar residues. Residues 142-146 (LKKLL) carry the LXXLL motif motif. N6-acetyllysine is present on Lys144. At Thr176 the chain carries Phosphothreonine; by AMPK. Lys182 carries the N6-acetyllysine modification. The tract at residues 211–275 (YLTTNDDPPH…NDPKGSPFEN (65 aa)) is disordered. Over residues 217–235 (DPPHTKPTENRNSSRDKCA) the composition is skewed to basic and acidic residues. A compositionally biased stretch (polar residues) spans 242–258 (TQPQSQHAQAKPTTLSL). 8 positions are modified to N6-acetyllysine: Lys252, Lys269, Lys276, Lys319, Lys345, Lys411, Lys440, and Lys449. Positions 288-350 (GTAGLTPPTT…HSTKKGPEQS (63 aa)) are disordered. The interaction with PPARG stretch occupies residues 291 to 337 (GLTPPTTPPHKANQDNPFKASPKLKPSCKTVVPPPTKRARYSECSGT). The tract at residues 348 to 796 (EQSELYAQLS…LKEAQRSLRR (449 aa)) is mediates interaction with RNF34. Ser537 bears the Phosphoserine; by AMPK mark. Disordered stretches follow at residues 541-597 (FNSP…SSRS) and 611-669 (HRNS…QKQK). The segment covering 561–576 (QRMRSRSRSFSRHRSC) has biased composition (basic residues). The span at 577 to 597 (SRSPYSRSRSRSPGSRSSSRS) shows a compositional bias: low complexity. The segment covering 620–629 (SRSRSPYSRR) has biased composition (basic residues). The segment covering 630–669 (PRYDSYEANEHERLKRDEYRREYEKRESERAKQRERQKQK) has biased composition (basic and acidic residues). Positions 675–751 (RVIYVGKIRP…TDFELYFCGR (77 aa)) constitute an RRM domain. N6-acetyllysine occurs at positions 756 and 777.

Homooligomer. Interacts with MYBBP1A; inhibits MYBBP1A transcriptional activation. Interacts with PRDM16, LPIN1 and PML. Interacts (via LXXLL motif) with RORA and RORC (via AF-2 motif); activates RORA and RORC transcriptional activation. Interacts with LRPPRC. Interacts with FOXO1. Interacts with NR5A2. Phosphorylation by AMPK in skeletal muscle increases activation of its own promoter. Phosphorylated by CLK2. In terms of processing, heavily acetylated by KAT2A/GCN5 under conditions of high nutrients, leading to inactivation of PPARGC1A. Deacetylated by SIRT1 in low nutrients/high NAD conditions, leading to its activation. Post-translationally, ubiquitinated. Ubiquitination by RNF34 induces proteasomal degradation.

It is found in the nucleus. The protein resides in the PML body. In terms of biological role, transcriptional coactivator for steroid receptors and nuclear receptors. Greatly increases the transcriptional activity of PPARG and thyroid hormone receptor on the uncoupling protein promoter. Can regulate key mitochondrial genes that contribute to the program of adaptive thermogenesis. Plays an essential role in metabolic reprogramming in response to dietary availability through coordination of the expression of a wide array of genes involved in glucose and fatty acid metabolism. Acts as a key regulator of gluconeogenesis: stimulates hepatic gluconeogenesis by increasing the expression of gluconeogenic enzymes, and acting together with FOXO1 to promote the fasting gluconeogenic program. Induces the expression of PERM1 in the skeletal muscle in an ESRRA-dependent manner. Also involved in the integration of the circadian rhythms and energy metabolism. Required for oscillatory expression of clock genes, such as BMAL1 and NR1D1, through the coactivation of RORA and RORC, and metabolic genes, such as PDK4 and PEPCK. The protein is Peroxisome proliferator-activated receptor gamma coactivator 1-alpha (Ppargc1a) of Rattus norvegicus (Rat).